The sequence spans 1017 residues: Pikachurin (1017 aa).

An N-terminal signal peptide occupies residues 1 to 24 (MDLIRGVLLRLLLLASSLGPGAVS). 2 consecutive Fibronectin type-III domains span residues 37–136 (PPLD…TLSQ) and 144–239 (APQQ…TLCP). N-linked (GlcNAc...) asparagine glycosylation is present at Asn-47. The EGF-like 1 domain maps to 343 to 381 (FDMPCDETLCSADSFCVNDYTWGGSRCQCTLGKGGESCS). 11 disulfide bridges follow: Cys-347–Cys-358, Cys-352–Cys-369, Cys-371–Cys-380, Cys-534–Cys-564, Cys-569–Cys-580, Cys-574–Cys-590, Cys-592–Cys-601, Cys-788–Cys-799, Cys-793–Cys-808, Cys-810–Cys-819, and Cys-987–Cys-1014. The Laminin G-like 1 domain maps to 386-564 (IQYPQFFGHS…ALSGADVGEC (179 aa)). 2 EGF-like domains span residues 565–602 (SSGI…RHCE) and 784–820 (AAHP…LHCQ). The 180-residue stretch at 609–788 (IPQFRESLRS…VNVENAAHPC (180 aa)) folds into the Laminin G-like 2 domain. The Laminin G-like 3 domain occupies 835-1014 (IEIPQFIGRS…AVDGKNINTC (180 aa)).

As to quaternary structure, interacts with DAG1 alpha-dystroglycan. Interacts with GPR158 and GPR179; transsynaptic interaction is required for synaptic organization of photoreceptor cells. Post-translationally, O-glycosylated; contains chondroitin sulfate and heparan sulfate.

It is found in the secreted. The protein localises to the extracellular space. The protein resides in the extracellular matrix. It localises to the synaptic cleft. Its subcellular location is the presynaptic active zone. Its function is as follows. Involved in both the retinal photoreceptor ribbon synapse formation and physiological functions of visual perception. Plays a key role in the synaptic organization of photoreceptors by mediating transsynaptic interaction between alpha-dystroglycan and GPR179 on the postsynaptic membrane. Necessary for proper bipolar dendritic tip apposition to the photoreceptor ribbon synapse. Promotes matrix assembly and cell adhesiveness. This chain is Pikachurin (EGFLAM), found in Homo sapiens (Human).